Here is a 596-residue protein sequence, read N- to C-terminus: MRGLNNIAVALALSAIWSFGLDLGRHGTSGSSLLLALFRTLCKAYPFVVISHFVWSAIIWPTFFSPLRQLPNVPSDGWLSKETLRLVSEPRGVPQSDWINSLSNRPVDLARYRSFLGFERLLIISPKALAEVLTTKSYDFRKPGLIVSELKQATGMGVLLAEGSEHKSQRKALQTAFNYRHIKNLYPVFWDVAGEFATVLEKQIPTGTPRTSDTTAVIDIVDWASRATLDIIGRAGMGQGFDAIQNDDSRLHQAYRMIFEPSRGAIFLALLRLIFPERLVNWLPLRRNKRMRHGIQVIRSKCQELIRERKEKIKRQKAGVDNSGNDILTVALLNGVFTDEQLIDQLMTFLAAGHETTATALTWAIYILCKQPEVQNRLREEIRMHFPNPKGWPRSERPSSNTLQQAIDFKLPYLNVVCLEVMRYFAPIPLTMREATCDTTILHTFVPAGTRIILAPRVTNRDSALWGPDANNFNPDRWLSPKNGNREATEQSKFKIGNQKRDSTAAPEVTQEEVRGRTEARSNYADLTFLHGPRSCIGQSFARVEFAILLATLIANFEFQIEDESLLDERNISISRGATSRIVGGLKVRVRPIAVV.

The segment at 476 to 512 (DRWLSPKNGNREATEQSKFKIGNQKRDSTAAPEVTQE) is disordered. Positions 484-503 (GNREATEQSKFKIGNQKRDS) are enriched in basic and acidic residues. A heme-binding site is contributed by Cys-536.

The protein belongs to the cytochrome P450 family. Heme serves as cofactor.

Its subcellular location is the endoplasmic reticulum. It functions in the pathway secondary metabolite biosynthesis. Functionally, cytochrome P450 monooxygenase; part of the gene cluster that mediates the biosynthesis of fumonisins B1 (FB1), B2 (FB2), B3 (FB3), and B4 (FB4), which are carcinogenic mycotoxins. Within the pathway, FUM15 may be responsible for the hydroxylations at positions C-14 and/or C-15. Also plays a role in self-protection from FB1 toxicity, probably through derivatization of FB1, and may contribute to ceramide biosynthesis. The biosynthesis starts with the FUM1-catalyzed carbon chain assembly from one molecule of acetyl-CoA, eight molecules of malonyl-CoA, and two molecules of methionine (in S-adenosyl form). The C18 polyketide chain is released from the enzyme by a nucleophilic attack of a carbanion, which is derived from R-carbon of alanine by decarboxylation, on the carbonyl carbon of polyketide acyl chain. This step is catalyzed by the pyridoxal 5'-phosphate-dependent aminoacyl transferase FUM8. The resultant 3-keto intermediate is then stereospecifically reduced to a 3-hydroxyl product by reductase FUM13. Subsequent oxidations at C-10 by the cytochrome P450 monooxygenase FUM2, C-14 and C-15 by FUM6, FUM12 or FUM15, tricarballylic esterification of the hydroxyl groups on C-14 and C-15 by acyltransferase FUM14, and C-5 hydroxylation by 2-keto-glutarate-dependent dioxygenase FUM3 furnish the biosynthesis of fumonisins. The tricarballylic moieties are most likely derived from the citric acid cycle, and their addition to the carbon backbone may involve FUM7, FUM10, FUM11 and FUM14. The chain is Cytochrome P450 monooxygenase FUM15 from Gibberella moniliformis (strain M3125 / FGSC 7600) (Maize ear and stalk rot fungus).